Reading from the N-terminus, the 163-residue chain is S-fimbrial adhesin protein SfaS (163 aa).

A signal peptide spans 1–22 (MKLKAIILATGLINCIAFSAQA). C38 and C75 are oxidised to a cystine. The interval 138-144 (KARAVSK) is involved in sialic acid binding.

The protein belongs to the fimbrial protein family.

It is found in the fimbrium. Its function is as follows. Fimbriae (also called pili), polar filaments radiating from the surface of the bacterium to a length of 0.5-1.5 micrometers and numbering 100-300 per cell, enable bacteria to colonize the epithelium of specific host organs. Functionally, a minor fimbrial subunit, this protein is necessary for full expression of S-specific binding. S-fimbrial adhesins enable pathogenic E.coli causing urinary-tract infections or newborn meningitis to attach to glycoproteins terminating with alpha-sialic acid-(2-3)-beta-Gal. This protein binds to the alpha-sialic acid-(2-3)-beta-Gal and is thus responsible for erythrocyte recognition and hemagglutination. This Escherichia coli O6:K15:H31 (strain 536 / UPEC) protein is S-fimbrial adhesin protein SfaS (sfaS).